A 348-amino-acid chain; its full sequence is Fe(3+) ions import ATP-binding protein FbpC (348 aa).

Positions V7–M237 constitute an ABC transporter domain. Position 39-46 (G39–T46) interacts with ATP.

This sequence belongs to the ABC transporter superfamily. Fe(3+) ion importer (TC 3.A.1.10) family. The complex is composed of two ATP-binding proteins (FbpC), two transmembrane proteins (FbpB) and a solute-binding protein (FbpA).

Its subcellular location is the cell inner membrane. It carries out the reaction Fe(3+)(out) + ATP + H2O = Fe(3+)(in) + ADP + phosphate + H(+). Part of the ABC transporter complex FbpABC involved in Fe(3+) ions import. Responsible for energy coupling to the transport system. This chain is Fe(3+) ions import ATP-binding protein FbpC, found in Escherichia coli O157:H7.